A 269-amino-acid polypeptide reads, in one-letter code: Hydroxyethylthiazole kinase (269 aa).

Position 46 (M46) interacts with substrate. ATP-binding residues include R121 and T166. G193 lines the substrate pocket.

This sequence belongs to the Thz kinase family. The cofactor is Mg(2+).

It catalyses the reaction 5-(2-hydroxyethyl)-4-methylthiazole + ATP = 4-methyl-5-(2-phosphooxyethyl)-thiazole + ADP + H(+). It functions in the pathway cofactor biosynthesis; thiamine diphosphate biosynthesis; 4-methyl-5-(2-phosphoethyl)-thiazole from 5-(2-hydroxyethyl)-4-methylthiazole: step 1/1. Catalyzes the phosphorylation of the hydroxyl group of 4-methyl-5-beta-hydroxyethylthiazole (THZ). The polypeptide is Hydroxyethylthiazole kinase (Limosilactobacillus reuteri (strain DSM 20016) (Lactobacillus reuteri)).